Consider the following 545-residue polypeptide: Tripartite motif-containing protein 55 (545 aa).

The RING-type zinc-finger motif lies at 26 to 82 (CPICLEMFTKPVVILPCQHNLCRKCASDIFQASNPYLPTRGGTTVASGGRFRCPSCR). The B box-type zinc finger occupies 119–161 (LDQPMCEEHEEERINIYCLNCEVPTCSLCKVFGAHKDCQVAPL). Residues Cys-124, His-127, Cys-147, and His-153 each contribute to the Zn(2+) site. A coiled-coil region spans residues 219–258 (YSILEERKTEMTQAITRTQEEKLEHVRTLIRKYSDHLENV). Positions 269–327 (MDEPEMAVFLQNAKTLLQKITEASKAFQMEKIEQGYEIMNNFTVNLNREEKIIREIDFS) constitute a COS domain. Disordered regions lie at residues 324-378 (IDFS…SELA) and 406-528 (LVTQ…GADS). Positions 328 to 355 (REEEDEDDEGEVDEEGEGEDAVEVEEAE) are enriched in acidic residues. 2 stretches are compositionally biased toward low complexity: residues 417 to 426 (SQQTTQSETS) and 469 to 493 (SAAE…AAVS). Residues 495–506 (KESSSTAATSQI) show a composition bias toward polar residues. A compositionally biased stretch (low complexity) spans 510 to 520 (ASSPQGQAAAL).

Homooligomer and heterooligomer. Interacts with titin/TTN. Interacts with myosins. Interacts with SQSTM1 and NBR1. Probably interacts with TRIM63 and TRIM54. Targeted for degradation through the proteasomal and lysosomal pathways in the presence of SUMO3.

The protein localises to the nucleus. The protein resides in the cytoplasm. It catalyses the reaction S-ubiquitinyl-[E2 ubiquitin-conjugating enzyme]-L-cysteine + [acceptor protein]-L-lysine = [E2 ubiquitin-conjugating enzyme]-L-cysteine + N(6)-ubiquitinyl-[acceptor protein]-L-lysine.. Functionally, E3 ubiquitin ligase that plays an important role in regulating cardiac development and contractility, muscle growth, metabolism, and fiber-type differentiation. Acts as a critical factor that regulates cardiomyocyte size during development in concert with TRIM63 by regulating E2F1-mediated gene expression. Plays a role in apoptosis induction in cardiomyocytes by promoting ubiquitination of the DUSP1 phosphatase. Promotes non-canonical NF-kappa-B signaling and B-cell-mediated immune responses by mediating NFKB2 'Lys-48'-linked ubiquitination and processing. In turn, NFKB2 is further processed by valosin-containing protein/VCP, an ATPase that mediates ubiquitin-dependent protein degradation by the proteasome. May play a role in preventing macrophages from producing inflammatory factors and migrating by downregulating the level of nuclear NF-kappa-B subunit RELA. Also modifies PPARG via polyubiquitination and accelerates PPARG proteasomal degradation to inhibit its activity. This Rattus norvegicus (Rat) protein is Tripartite motif-containing protein 55 (Trim55).